Consider the following 43-residue polypeptide: uncharacterized protein (43 aa).

It belongs to the ELIP/psbS family.

The protein resides in the plastid. It localises to the chloroplast. Its function is as follows. Possible role in chlorophyll and/or carotenoid binding. This is an uncharacterized protein from Cyanidium caldarium (Red alga).